The sequence spans 432 residues: Glutamyl-tRNA reductase (432 aa).

Substrate is bound by residues 55–58, Ser-113, 118–120, and Gln-124; these read TCNR and EAQ. Cys-56 functions as the Nucleophile in the catalytic mechanism. 193–198 contributes to the NADP(+) binding site; it reads GAGEMI.

This sequence belongs to the glutamyl-tRNA reductase family. In terms of assembly, homodimer.

The enzyme catalyses (S)-4-amino-5-oxopentanoate + tRNA(Glu) + NADP(+) = L-glutamyl-tRNA(Glu) + NADPH + H(+). It participates in porphyrin-containing compound metabolism; protoporphyrin-IX biosynthesis; 5-aminolevulinate from L-glutamyl-tRNA(Glu): step 1/2. Catalyzes the NADPH-dependent reduction of glutamyl-tRNA(Glu) to glutamate 1-semialdehyde (GSA). This Paracidovorax citrulli (strain AAC00-1) (Acidovorax citrulli) protein is Glutamyl-tRNA reductase.